The following is a 101-amino-acid chain: Urease subunit beta (101 aa).

The protein belongs to the urease beta subunit family. Heterotrimer of UreA (gamma), UreB (beta) and UreC (alpha) subunits. Three heterotrimers associate to form the active enzyme.

The protein localises to the cytoplasm. It carries out the reaction urea + 2 H2O + H(+) = hydrogencarbonate + 2 NH4(+). The protein operates within nitrogen metabolism; urea degradation; CO(2) and NH(3) from urea (urease route): step 1/1. The chain is Urease subunit beta from Pseudomonas fluorescens (strain ATCC BAA-477 / NRRL B-23932 / Pf-5).